A 227-amino-acid polypeptide reads, in one-letter code: Large ribosomal subunit protein uL3 (227 aa).

Glutamine 151 bears the N5-methylglutamine mark.

Belongs to the universal ribosomal protein uL3 family. In terms of assembly, part of the 50S ribosomal subunit. Forms a cluster with proteins L14 and L19. Methylated by PrmB.

Functionally, one of the primary rRNA binding proteins, it binds directly near the 3'-end of the 23S rRNA, where it nucleates assembly of the 50S subunit. The polypeptide is Large ribosomal subunit protein uL3 (Gluconacetobacter diazotrophicus (strain ATCC 49037 / DSM 5601 / CCUG 37298 / CIP 103539 / LMG 7603 / PAl5)).